The chain runs to 453 residues: Na(+)/H(+) antiporter NhaA 2 (453 aa).

12 consecutive transmembrane segments (helical) span residues 23–43, 74–94, 111–131, 139–159, 168–188, 191–211, 214–234, 235–255, 316–336, 345–365, 386–406, and 419–439; these read FLHIEAVSGIVLLIAAVAALI, LHFWINDGLMTIFFLVVGMEI, LPMAAAVGGVAVPALLYLSFG, GWAVPTATDIAFAVGVLALLG, VFLLALAIIDDIIAVLIIAFF, GGLDYTGFGVALIGLLMVIGL, IGVGSAYAYVLPGAIVWLGIL, LTGAHPTLAGVVLGLMTPVTA, VAFGIMPVFALANAGVSLSGV, WVMIAVAVALVAGKPLGIVSV, IVLVGLLAGIGFTMSIFIANL, and LGVLSASLIAAVLGLTWGVWS.

Belongs to the NhaA Na(+)/H(+) (TC 2.A.33) antiporter family.

It localises to the cell inner membrane. It carries out the reaction Na(+)(in) + 2 H(+)(out) = Na(+)(out) + 2 H(+)(in). Na(+)/H(+) antiporter that extrudes sodium in exchange for external protons. The protein is Na(+)/H(+) antiporter NhaA 2 of Pseudomonas putida (strain ATCC 700007 / DSM 6899 / JCM 31910 / BCRC 17059 / LMG 24140 / F1).